A 297-amino-acid chain; its full sequence is Ribosomal protein L11 methyltransferase (297 aa).

4 residues coordinate S-adenosyl-L-methionine: T152, G173, D195, and N234.

The protein belongs to the methyltransferase superfamily. PrmA family.

Its subcellular location is the cytoplasm. It carries out the reaction L-lysyl-[protein] + 3 S-adenosyl-L-methionine = N(6),N(6),N(6)-trimethyl-L-lysyl-[protein] + 3 S-adenosyl-L-homocysteine + 3 H(+). Methylates ribosomal protein L11. In Cupriavidus pinatubonensis (strain JMP 134 / LMG 1197) (Cupriavidus necator (strain JMP 134)), this protein is Ribosomal protein L11 methyltransferase.